A 231-amino-acid chain; its full sequence is MKRAVVVFSGGQDSTTCLVQALQQYDEVHCVTFDYGQQHRAEIDVARELALKLGARAHKVLDVTLLNELAVSSLTRDSIPVPDYEPEADGIPNTFVPGRNILFLTLAAIYAYQVKAEAVITGVCETDFSGYPDCRDEFVKALNHAVSLGMAKDIRFETPLMWIDKAETWALADYYGKLDLVRNETLTCYNGIKGDGCGHCAACNLRANGLNHYLADKPTVMAAMKQKTGLR.

8-18 is an ATP binding site; sequence FSGGQDSTTCL. Residues cysteine 188, cysteine 197, cysteine 200, and cysteine 203 each contribute to the Zn(2+) site.

It belongs to the QueC family. The cofactor is Zn(2+).

It carries out the reaction 7-carboxy-7-deazaguanine + NH4(+) + ATP = 7-cyano-7-deazaguanine + ADP + phosphate + H2O + H(+). It participates in purine metabolism; 7-cyano-7-deazaguanine biosynthesis. Catalyzes the ATP-dependent conversion of 7-carboxy-7-deazaguanine (CDG) to 7-cyano-7-deazaguanine (preQ(0)). The chain is 7-cyano-7-deazaguanine synthase from Shigella flexneri serotype 5b (strain 8401).